A 217-amino-acid chain; its full sequence is UPF0173 metal-dependent hydrolase MJ1163 (217 aa).

Belongs to the UPF0173 family.

The protein is UPF0173 metal-dependent hydrolase MJ1163 of Methanocaldococcus jannaschii (strain ATCC 43067 / DSM 2661 / JAL-1 / JCM 10045 / NBRC 100440) (Methanococcus jannaschii).